Consider the following 293-residue polypeptide: AKT-interacting protein homolog A (293 aa).

Over residues 1–11 the composition is skewed to polar residues; the sequence is MNPFWNMSSAS. The segment at 1–45 is disordered; sequence MNPFWNMSSASVRKRSENDEKISTGDQKISPPRSSSAKKQLPPIP. Over residues 14 to 23 the composition is skewed to basic and acidic residues; the sequence is KRSENDEKIS. The span at 24–38 shows a compositional bias: polar residues; that stretch reads TGDQKISPPRSSSAK. A UBC core domain is found at 75-223; sequence YLEYSLLAEF…VVDSVKLCNS (149 aa). Over residues 256-266 the composition is skewed to basic and acidic residues; sequence AQKKKSEEQSK. The segment at 256-293 is disordered; the sequence is AQKKKSEEQSKGLHVSGLSWVKPGSVLPFSKEENSLQT.

Belongs to the ubiquitin-conjugating enzyme family. FTS subfamily.

The protein resides in the cytoplasm. The protein localises to the cell membrane. Functionally, may function to promote vesicle trafficking and/or fusion. May also regulate apoptosis. The protein is AKT-interacting protein homolog A (aktip-a) of Xenopus laevis (African clawed frog).